Reading from the N-terminus, the 318-residue chain is Methionyl-tRNA formyltransferase (318 aa).

Residue 110-113 participates in (6S)-5,6,7,8-tetrahydrofolate binding; the sequence is SLLP.

This sequence belongs to the Fmt family.

It carries out the reaction L-methionyl-tRNA(fMet) + (6R)-10-formyltetrahydrofolate = N-formyl-L-methionyl-tRNA(fMet) + (6S)-5,6,7,8-tetrahydrofolate + H(+). Attaches a formyl group to the free amino group of methionyl-tRNA(fMet). The formyl group appears to play a dual role in the initiator identity of N-formylmethionyl-tRNA by promoting its recognition by IF2 and preventing the misappropriation of this tRNA by the elongation apparatus. The chain is Methionyl-tRNA formyltransferase from Lacticaseibacillus paracasei (strain ATCC 334 / BCRC 17002 / CCUG 31169 / CIP 107868 / KCTC 3260 / NRRL B-441) (Lactobacillus paracasei).